The sequence spans 142 residues: Large ribosomal subunit protein uL11 (142 aa).

The protein belongs to the universal ribosomal protein uL11 family. In terms of assembly, part of the ribosomal stalk of the 50S ribosomal subunit. Interacts with L10 and the large rRNA to form the base of the stalk. L10 forms an elongated spine to which L12 dimers bind in a sequential fashion forming a multimeric L10(L12)X complex. One or more lysine residues are methylated.

Forms part of the ribosomal stalk which helps the ribosome interact with GTP-bound translation factors. This is Large ribosomal subunit protein uL11 from Aliivibrio fischeri (strain MJ11) (Vibrio fischeri).